Consider the following 806-residue polypeptide: Dimethyl sulfoxide reductase DmsA (806 aa).

Residues 1 to 35 constitute a signal peptide (tat-type signal); it reads MSNFNQISRRDFVKASSAGAALAVSNLTLPFNVMA. The region spanning 47-109 is the 4Fe-4S Mo/W bis-MGD-type domain; the sequence is ERIVWSACTV…SMRRRVYNPD (63 aa). [4Fe-4S] cluster-binding residues include cysteine 54, cysteine 58, cysteine 62, and cysteine 95. Residues 163–167, serine 196, 236–237, 262–263, 283–285, 378–379, arginine 382, asparagine 480, 504–505, histidine 693, 699–701, asparagine 780, and 796–797 contribute to the Mo-bis(molybdopterin guanine dinucleotide) site; these read LGGTM, ET, ID, GTD, WG, HST, and QH. The disordered stretch occupies residues 786-806; that stretch reads RPSPLAKGNPQHSNLVQVERL. The span at 795–806 shows a compositional bias: polar residues; that stretch reads PQHSNLVQVERL.

This sequence belongs to the prokaryotic molybdopterin-containing oxidoreductase family. In terms of assembly, heterotrimeric enzyme composed of a catalytic heterodimer (DmsAB) and a membrane anchor protein (DmsC). The cofactor is [4Fe-4S] cluster. Mo-bis(molybdopterin guanine dinucleotide) is required as a cofactor. Post-translationally, predicted to be exported by the Tat system. The position of the signal peptide cleavage has not been experimentally proven.

Its subcellular location is the cell membrane. It carries out the reaction dimethyl sulfide + a menaquinone + H2O = dimethyl sulfoxide + a menaquinol. Functionally, catalyzes the reduction of dimethyl sulfoxide (DMSO) to dimethyl sulfide (DMS). The terminal DMSO reductase can also use various sulfoxides and N-oxide compounds as terminal electron acceptor in addition to DMSO. The protein is Dimethyl sulfoxide reductase DmsA (dmsA) of Haemophilus influenzae (strain ATCC 51907 / DSM 11121 / KW20 / Rd).